The following is a 264-amino-acid chain: tRNA pseudouridine synthase A (264 aa).

D51 acts as the Nucleophile in catalysis. Position 109 (Y109) interacts with substrate.

It belongs to the tRNA pseudouridine synthase TruA family. In terms of assembly, homodimer.

The enzyme catalyses uridine(38/39/40) in tRNA = pseudouridine(38/39/40) in tRNA. Functionally, formation of pseudouridine at positions 38, 39 and 40 in the anticodon stem and loop of transfer RNAs. This is tRNA pseudouridine synthase A from Vibrio atlanticus (strain LGP32) (Vibrio splendidus (strain Mel32)).